Reading from the N-terminus, the 329-residue chain is 4-hydroxythreonine-4-phosphate dehydrogenase (329 aa).

Residues H136 and T137 each coordinate substrate. Residues H166, H211, and H266 each contribute to the a divalent metal cation site. Substrate contacts are provided by K274, N283, and R292.

Belongs to the PdxA family. As to quaternary structure, homodimer. It depends on Zn(2+) as a cofactor. The cofactor is Mg(2+). Co(2+) serves as cofactor.

The protein resides in the cytoplasm. The catalysed reaction is 4-(phosphooxy)-L-threonine + NAD(+) = 3-amino-2-oxopropyl phosphate + CO2 + NADH. It participates in cofactor biosynthesis; pyridoxine 5'-phosphate biosynthesis; pyridoxine 5'-phosphate from D-erythrose 4-phosphate: step 4/5. Its function is as follows. Catalyzes the NAD(P)-dependent oxidation of 4-(phosphooxy)-L-threonine (HTP) into 2-amino-3-oxo-4-(phosphooxy)butyric acid which spontaneously decarboxylates to form 3-amino-2-oxopropyl phosphate (AHAP). The sequence is that of 4-hydroxythreonine-4-phosphate dehydrogenase from Shigella boydii serotype 18 (strain CDC 3083-94 / BS512).